The chain runs to 133 residues: UPF0102 protein AB57_1130 (133 aa).

The protein belongs to the UPF0102 family.

The chain is UPF0102 protein AB57_1130 from Acinetobacter baumannii (strain AB0057).